The following is a 512-amino-acid chain: ETS translocation variant 3 (512 aa).

The ETS DNA-binding region spans 35–116; that stretch reads IQLWHFILEL…KGKRFTYKFN (82 aa). Positions 138 to 196 are disordered; the sequence is QSAPPVPTASSRFHFPPLDTHSPTSDVQPGRFSASSLTASGQESSNGTDRKAELSXLED. 3 positions are modified to phosphoserine: Ser-139, Ser-159, and Ser-315. A compositionally biased stretch (polar residues) spans 158–184; the sequence is HSPTSDVQPGRFSASSLTASGQESSNG. The tract at residues 341–512 is disordered; that stretch reads QFSIKLQPPP…QGLATAAADA (172 aa). Residues 380–406 show a composition bias toward basic and acidic residues; that stretch reads IKVEPASEKDAESLRQSAREKEEHTXE. Lys-381 is covalently cross-linked (Glycyl lysine isopeptide (Lys-Gly) (interchain with G-Cter in SUMO2)). Lys-388 is modified (N6-acetyllysine; alternate). Residue Lys-388 forms a Glycyl lysine isopeptide (Lys-Gly) (interchain with G-Cter in SUMO2); alternate linkage. Residues 443 to 452 are compositionally biased toward acidic residues; it reads EPLEVTEDIE. 2 stretches are compositionally biased toward basic and acidic residues: residues 453–468 and 479–491; these read DRPG…KEDA and RWND…ELSK.

It belongs to the ETS family.

Its subcellular location is the nucleus. Functionally, transcriptional repressor that contribute to growth arrest during terminal macrophage differentiation by repressing target genes involved in Ras-dependent proliferation. Represses MMP1 promoter activity. This Ateles geoffroyi (Black-handed spider monkey) protein is ETS translocation variant 3 (ETV3).